A 61-amino-acid polypeptide reads, in one-letter code: Photosystem II reaction center X protein (61 aa).

Residues isoleucine 26–phenylalanine 46 traverse the membrane as a helical segment.

The protein belongs to the PsbX family. Type 2 subfamily. As to quaternary structure, PSII consists of a core antenna complex that captures photons, and an electron transfer chain that converts photonic excitation into a charge separation. PSII forms dimeric complexes.

The protein resides in the cellular thylakoid membrane. Involved in the binding and/or turnover of quinones at the Q(B) site of Photosystem II. The polypeptide is Photosystem II reaction center X protein (Prochlorococcus marinus (strain MIT 9215)).